The sequence spans 466 residues: Carboxy-terminal processing protease CtpA (466 aa).

A signal peptide spans 1-36 (MKRQLKLFFIVLITAVVASALTLFITGNSSILGQKS). The PDZ domain occupies 96–174 (DETISASFEG…TKVKLELNRA (79 aa)). Active-site charge relay system residues include Ser297, Glu308, and Lys322.

This sequence belongs to the peptidase S41A family.

The enzyme catalyses The enzyme shows specific recognition of a C-terminal tripeptide, Xaa-Yaa-Zaa, in which Xaa is preferably Ala or Leu, Yaa is preferably Ala or Tyr, and Zaa is preferably Ala, but then cleaves at a variable distance from the C-terminus. A typical cleavage is -Ala-Ala-|-Arg-Ala-Ala-Lys-Glu-Asn-Tyr-Ala-Leu-Ala-Ala.. The polypeptide is Carboxy-terminal processing protease CtpA (ctpA) (Bacillus subtilis (strain 168)).